A 380-amino-acid polypeptide reads, in one-letter code: tRNA pseudouridine synthase B (380 aa).

Residue Asp63 is the Nucleophile of the active site. Positions 309-339 (QNVEDDNDDNDDNDDNDDNDDNDDNDDNDDN) are disordered. Residues 311–338 (VEDDNDDNDDNDDNDDNDDNDDNDDNDD) show a composition bias toward acidic residues.

This sequence belongs to the pseudouridine synthase TruB family. Type 1 subfamily.

The enzyme catalyses uridine(55) in tRNA = pseudouridine(55) in tRNA. Functionally, responsible for synthesis of pseudouridine from uracil-55 in the psi GC loop of transfer RNAs. In Psychrobacter arcticus (strain DSM 17307 / VKM B-2377 / 273-4), this protein is tRNA pseudouridine synthase B.